Here is a 241-residue protein sequence, read N- to C-terminus: Phosphoribosylaminoimidazole-succinocarboxamide synthase (241 aa).

Belongs to the SAICAR synthetase family.

It carries out the reaction 5-amino-1-(5-phospho-D-ribosyl)imidazole-4-carboxylate + L-aspartate + ATP = (2S)-2-[5-amino-1-(5-phospho-beta-D-ribosyl)imidazole-4-carboxamido]succinate + ADP + phosphate + 2 H(+). It participates in purine metabolism; IMP biosynthesis via de novo pathway; 5-amino-1-(5-phospho-D-ribosyl)imidazole-4-carboxamide from 5-amino-1-(5-phospho-D-ribosyl)imidazole-4-carboxylate: step 1/2. The polypeptide is Phosphoribosylaminoimidazole-succinocarboxamide synthase (Methanoculleus marisnigri (strain ATCC 35101 / DSM 1498 / JR1)).